A 397-amino-acid chain; its full sequence is Pectate lyase (397 aa).

Residues 1-25 (MDVYRIRISVFFLLVLLTFAALTTA) form the signal peptide. The N-linked (GlcNAc...) asparagine glycan is linked to Asn-134. Residues Asp-191, Asp-216, and Asp-220 each coordinate Ca(2+). An N-linked (GlcNAc...) asparagine glycan is attached at Asn-227. Arg-272 is an active-site residue.

This sequence belongs to the polysaccharide lyase 1 family. Ca(2+) serves as cofactor.

It carries out the reaction Eliminative cleavage of (1-&gt;4)-alpha-D-galacturonan to give oligosaccharides with 4-deoxy-alpha-D-galact-4-enuronosyl groups at their non-reducing ends.. The protein operates within glycan metabolism; pectin degradation; 2-dehydro-3-deoxy-D-gluconate from pectin: step 2/5. The chain is Pectate lyase from Nicotiana tabacum (Common tobacco).